A 49-amino-acid chain; its full sequence is Large ribosomal subunit protein bL33B (49 aa).

It belongs to the bacterial ribosomal protein bL33 family.

The polypeptide is Large ribosomal subunit protein bL33B (rpmG2) (Listeria innocua serovar 6a (strain ATCC BAA-680 / CLIP 11262)).